The sequence spans 42 residues: Cytochrome b6-f complex subunit 7 (42 aa).

A helical transmembrane segment spans residues 19 to 37 (AVTCIFMTLFGLSLGFALL).

It belongs to the PetM family. The 4 large subunits of the cytochrome b6-f complex are cytochrome b6, subunit IV (17 kDa polypeptide, PetD), cytochrome f and the Rieske protein, while the 4 small subunits are PetG, PetL, PetM and PetN. The complex functions as a dimer.

The protein resides in the plastid. Its subcellular location is the chloroplast thylakoid membrane. Its function is as follows. Component of the cytochrome b6-f complex, which mediates electron transfer between photosystem II (PSII) and photosystem I (PSI), cyclic electron flow around PSI, and state transitions. The sequence is that of Cytochrome b6-f complex subunit 7 from Thalassiosira pseudonana (Marine diatom).